Here is a 620-residue protein sequence, read N- to C-terminus: 1-deoxy-D-xylulose-5-phosphate synthase (620 aa).

Residues H80 and 121 to 123 (GHS) each bind thiamine diphosphate. D152 is a Mg(2+) binding site. Residues 153-154 (GA), N181, Y288, and E370 each bind thiamine diphosphate. N181 lines the Mg(2+) pocket.

It belongs to the transketolase family. DXPS subfamily. As to quaternary structure, homodimer. Mg(2+) is required as a cofactor. Thiamine diphosphate serves as cofactor.

The catalysed reaction is D-glyceraldehyde 3-phosphate + pyruvate + H(+) = 1-deoxy-D-xylulose 5-phosphate + CO2. The protein operates within metabolic intermediate biosynthesis; 1-deoxy-D-xylulose 5-phosphate biosynthesis; 1-deoxy-D-xylulose 5-phosphate from D-glyceraldehyde 3-phosphate and pyruvate: step 1/1. Its function is as follows. Catalyzes the acyloin condensation reaction between C atoms 2 and 3 of pyruvate and glyceraldehyde 3-phosphate to yield 1-deoxy-D-xylulose-5-phosphate (DXP). The sequence is that of 1-deoxy-D-xylulose-5-phosphate synthase from Escherichia fergusonii (strain ATCC 35469 / DSM 13698 / CCUG 18766 / IAM 14443 / JCM 21226 / LMG 7866 / NBRC 102419 / NCTC 12128 / CDC 0568-73).